Here is a 1009-residue protein sequence, read N- to C-terminus: Protein-tyrosine kinase 2-beta (1009 aa).

The FERM domain maps to 39 to 359 (RILKVCFYSN…GYCRLQGEHK (321 aa)). Ser-361, Ser-375, and Ser-399 each carry phosphoserine. Tyr-402 carries the post-translational modification Phosphotyrosine; by autocatalysis. The Protein kinase domain occupies 425–683 (VVLNRILGEG…ELVCSLSDIY (259 aa)). ATP-binding positions include 431–439 (LGEGFFGEV), Lys-457, and 503–509 (ELYPYGE). Asp-549 serves as the catalytic Proton acceptor. A phosphotyrosine mark is found at Tyr-579, Tyr-580, and Tyr-722. The tract at residues 702-725 (PKILEPTAFQEPPPKPSRPKYKHP) is disordered. Position 762 is a phosphoserine (Ser-762). The residue at position 765 (Thr-765) is a Phosphothreonine. Positions 801–1009 (KIKMRQVLDR…VANLAHPPAE (209 aa)) are interaction with TGFB1I1. Tyr-834 is modified (phosphotyrosine). Residue Ser-839 is modified to Phosphoserine. Phosphothreonine is present on Thr-842. Tyr-849 is modified (phosphotyrosine). Ser-866 is subject to Phosphoserine. The tract at residues 868 to 1009 (QPTANLDRTD…VANLAHPPAE (142 aa)) is focal adhesion targeting (FAT). Position 881 is a phosphotyrosine (Tyr-881).

The protein belongs to the protein kinase superfamily. Tyr protein kinase family. FAK subfamily. Homodimer, or homooligomer. Interacts with NPHP1, ASAP1, ASAP2, ARHGAP26, SKAP2 and TGFB1I1. The Tyr-402 phosphorylated form interacts with SRC (via SH2 domain) and SRC family members. Forms a signaling complex with EPHA1, LCK and phosphatidylinositol 3-kinase; upon activation by EFNA1. Interacts with GRB2 (via SH2 domain). Interacts with P53/TP53 and MDM2. Interacts with MYLK. Interacts with BCAR1. Interacts with RB1CC1. Interacts with RHOU. Interacts with VAV1. Interacts with PDPK1. Interacts with LPXN and PTPN12. Interacts with SIRPA and SH2D3C. Interacts (hypophosphorylated) with PXN. Interacts with ARHGAP10. Interacts with KCNA2. Post-translationally, phosphorylated on tyrosine residues in response to various stimuli that elevate the intracellular calcium concentration; this activation is indirect and may be mediated by production of reactive oxygen species (ROS). Tyr-402 is the major autophosphorylation site, but other kinases can also phosphorylate Tyr-402. Autophosphorylation occurs in trans, i.e. one subunit of the dimeric receptor phosphorylates tyrosine residues on the other subunit. Phosphorylation at Tyr-402 promotes interaction with SRC and SRC family members, leading to phosphorylation at Tyr-579; Tyr-580 and Tyr-881. Phosphorylation at Tyr-881 is important for interaction with GRB2. Phosphorylated on tyrosine residues upon activation of FGR and PKC. Recruitment by NPHP1 to cell matrix adhesions initiates Tyr-402 phosphorylation. In monocytes, adherence to substrata is required for tyrosine phosphorylation and kinase activation. Angiotensin II, thapsigargin and L-alpha-lysophosphatidic acid (LPA) also induce autophosphorylation and increase kinase activity. Phosphorylation by MYLK promotes ITGB2 activation and is thus essential to trigger neutrophil transmigration during lung injury. Dephosphorylated by PTPN12. Highly expressed in pulmonary vein endothelial cells, lung and brain (at protein level). Isoform 1 is expressed at high levels in the brain (hippocampus, cerebral cortex and olfactory bulb) and poorly in the spleen and other tissues, whereas isoforms 2 and 3 are expressed in the spleen and brain (highest in cerebellum).

The protein resides in the cytoplasm. The protein localises to the perinuclear region. It is found in the cell membrane. It localises to the cell projection. Its subcellular location is the lamellipodium. The protein resides in the cell cortex. The protein localises to the nucleus. It is found in the cell junction. It localises to the focal adhesion. The catalysed reaction is L-tyrosyl-[protein] + ATP = O-phospho-L-tyrosyl-[protein] + ADP + H(+). Activated in response to stimuli that lead to increased intracellular Ca(2+) levels; this activation is indirect and may be mediated by calcium-mediated production of reactive oxygen species (ROS). Activated by autophosphorylation at Tyr-402; this creates a binding site for SRC family kinases and leads to phosphorylation at additional tyrosine residues. Phosphorylation at Tyr-402, Tyr-579 and Tyr-580 is required for optimal kinase activity. Its function is as follows. Non-receptor protein-tyrosine kinase that regulates reorganization of the actin cytoskeleton, cell polarization, cell migration, adhesion, spreading and bone remodeling. Plays a role in the regulation of the humoral immune response, and is required for normal levels of marginal B-cells in the spleen and normal migration of splenic B-cells. Required for normal macrophage polarization and migration towards sites of inflammation. Regulates cytoskeleton rearrangement and cell spreading in T-cells, and contributes to the regulation of T-cell responses. Promotes osteoclastic bone resorption; this requires both PTK2B/PYK2 and SRC. May inhibit differentiation and activity of osteoprogenitor cells. Functions in signaling downstream of integrin and collagen receptors, immune receptors, G-protein coupled receptors (GPCR), cytokine, chemokine and growth factor receptors, and mediates responses to cellular stress. Forms multisubunit signaling complexes with SRC and SRC family members upon activation; this leads to the phosphorylation of additional tyrosine residues, creating binding sites for scaffold proteins, effectors and substrates. Regulates numerous signaling pathways. Promotes activation of phosphatidylinositol 3-kinase and of the AKT1 signaling cascade. Promotes activation of NOS3. Regulates production of the cellular messenger cGMP. Promotes activation of the MAP kinase signaling cascade, including activation of MAPK1/ERK2, MAPK3/ERK1 and MAPK8/JNK1. Promotes activation of Rho family GTPases, such as RHOA and RAC1. Recruits the ubiquitin ligase MDM2 to P53/TP53 in the nucleus, and thereby regulates P53/TP53 activity, P53/TP53 ubiquitination and proteasomal degradation. Acts as a scaffold, binding to both PDPK1 and SRC, thereby allowing SRC to phosphorylate PDPK1 at 'Tyr-9, 'Tyr-373', and 'Tyr-376'. Promotes phosphorylation of NMDA receptors by SRC family members, and thereby contributes to the regulation of NMDA receptor ion channel activity and intracellular Ca(2+) levels. May also regulate potassium ion transport by phosphorylation of potassium channel subunits. Phosphorylates SRC; this increases SRC kinase activity. Phosphorylates ASAP1, NPHP1, KCNA2 and SHC1. Promotes phosphorylation of ASAP2, RHOU and PXN; this requires both SRC and PTK2/PYK2. This chain is Protein-tyrosine kinase 2-beta (Ptk2b), found in Rattus norvegicus (Rat).